A 930-amino-acid chain; its full sequence is Protein translocase subunit SecA (930 aa).

ATP-binding positions include Q87, 105 to 109 (GEGKT), and D515. Positions 914, 916, 925, and 926 each coordinate Zn(2+).

This sequence belongs to the SecA family. Monomer and homodimer. Part of the essential Sec protein translocation apparatus which comprises SecA, SecYEG and auxiliary proteins SecDF-YajC and YidC. Requires Zn(2+) as cofactor.

It localises to the cell inner membrane. Its subcellular location is the cytoplasm. The enzyme catalyses ATP + H2O + cellular proteinSide 1 = ADP + phosphate + cellular proteinSide 2.. Its function is as follows. Part of the Sec protein translocase complex. Interacts with the SecYEG preprotein conducting channel. Has a central role in coupling the hydrolysis of ATP to the transfer of proteins into and across the cell membrane, serving both as a receptor for the preprotein-SecB complex and as an ATP-driven molecular motor driving the stepwise translocation of polypeptide chains across the membrane. This chain is Protein translocase subunit SecA, found in Burkholderia thailandensis (strain ATCC 700388 / DSM 13276 / CCUG 48851 / CIP 106301 / E264).